The sequence spans 605 residues: Zinc metalloproteinase nas-34 (605 aa).

The N-terminal stretch at 1-19 (MVSYWPVLIVLCLLPICHA) is a signal peptide. The propeptide occupies 20–124 (KSYFADFVNG…EFLYAIRGKR (105 aa)). The region spanning 124 to 322 (RSMTSFLSER…VKRINFAYCN (199 aa)) is the Peptidase M12A domain. 2 disulfides stabilise this stretch: Cys-165–Cys-321 and Cys-191–Cys-211. His-219 provides a ligand contact to Zn(2+). The active site involves Glu-220. His-223 and His-229 together coordinate Zn(2+). Residues 317–357 (NFAYCNSTCSNYLDCQNGGYINPNDCNNCKCPPGFGGQLCD) form the EGF-like domain. Asn-322 carries N-linked (GlcNAc...) asparagine glycosylation. 4 disulfides stabilise this stretch: Cys-325-Cys-345, Cys-347-Cys-356, Cys-366-Cys-388, and Cys-415-Cys-436. The CUB domain maps to 366 to 469 (CGAGDITATS…ARFSLNYRYD (104 aa)). The interval 479 to 526 (TTTSTTTTTAPITVPTVSPTTTTTRQTTTTARTSTTTTTTQAPPTTTT) is disordered. The TSP type-1 domain maps to 525 to 566 (TTSTSQCASWSACSAQCGGCGTQSRRCGTYVETVYCNTNPCT). Intrachain disulfides connect Cys-531–Cys-551, Cys-537–Cys-560, and Cys-541–Cys-565.

The cofactor is Zn(2+). In terms of tissue distribution, expressed in hypodermal cells. First expressed in the dorsal and lateral surface area of the middle and posterior region of embryos. At later stages, it localizes to lateral surface regions, probably corresponding to hypodermal seam cells. In L1 larvae, it is expressed in seam cells and in a few cells anterior to the nerve ring.

The protein localises to the secreted. Functionally, metalloprotease. Required for normal hatching and migration of neuroblasts. May act by degrading eggshell proteins at hatching. The protein is Zinc metalloproteinase nas-34 (hch-1) of Caenorhabditis elegans.